Reading from the N-terminus, the 652-residue chain is DNA ligase (652 aa).

Residues 29–33 (DSEYD), 78–79 (SL), and Glu107 contribute to the NAD(+) site. The active-site N6-AMP-lysine intermediate is Lys109. NAD(+)-binding residues include Arg130, Glu164, Lys278, and Lys302. Zn(2+)-binding residues include Cys395, Cys398, Cys413, and Cys418. The region spanning 577–652 (VADAALSGLT…VRDEAWLESL (76 aa)) is the BRCT domain.

Belongs to the NAD-dependent DNA ligase family. LigA subfamily. It depends on Mg(2+) as a cofactor. The cofactor is Mn(2+).

The enzyme catalyses NAD(+) + (deoxyribonucleotide)n-3'-hydroxyl + 5'-phospho-(deoxyribonucleotide)m = (deoxyribonucleotide)n+m + AMP + beta-nicotinamide D-nucleotide.. Its function is as follows. DNA ligase that catalyzes the formation of phosphodiester linkages between 5'-phosphoryl and 3'-hydroxyl groups in double-stranded DNA using NAD as a coenzyme and as the energy source for the reaction. It is essential for DNA replication and repair of damaged DNA. The polypeptide is DNA ligase (Streptococcus pneumoniae serotype 4 (strain ATCC BAA-334 / TIGR4)).